The following is a 190-amino-acid chain: Small ribosomal subunit protein eS7 (190 aa).

It belongs to the eukaryotic ribosomal protein eS7 family. In terms of assembly, component of the small ribosomal subunit. Part of the small subunit (SSU) processome, composed of more than 70 proteins and the RNA chaperone small nucleolar RNA (snoRNA) U3.

It localises to the cytoplasm. It is found in the cytoskeleton. Its subcellular location is the microtubule organizing center. The protein localises to the centrosome. The protein resides in the nucleus. It localises to the nucleolus. Component of the small ribosomal subunit. The ribosome is a large ribonucleoprotein complex responsible for the synthesis of proteins in the cell. Required for rRNA maturation. Part of the small subunit (SSU) processome, first precursor of the small eukaryotic ribosomal subunit. During the assembly of the SSU processome in the nucleolus, many ribosome biogenesis factors, an RNA chaperone and ribosomal proteins associate with the nascent pre-rRNA and work in concert to generate RNA folding, modifications, rearrangements and cleavage as well as targeted degradation of pre-ribosomal RNA by the RNA exosome. The sequence is that of Small ribosomal subunit protein eS7 (RpS7) from Spodoptera frugiperda (Fall armyworm).